We begin with the raw amino-acid sequence, 328 residues long: Probable transcription factor At4g00610 (328 aa).

Positions 31–143 (AKNKTLVTPS…ERAKTETETG (113 aa)) are disordered. The span at 35-54 (TLVTPSTVKKSSDVASTSKK) shows a compositional bias: polar residues. Residues 84-108 (SEEEEEDEPSSDSESGSESESDTEA) are compositionally biased toward acidic residues. Positions 122 to 143 (NEKRQSEGKPEEERAKTETETG) are enriched in basic and acidic residues.

This sequence belongs to the GeBP family.

In Arabidopsis thaliana (Mouse-ear cress), this protein is Probable transcription factor At4g00610.